Consider the following 360-residue polypeptide: UDP-N-acetylglucosamine--N-acetylmuramyl-(pentapeptide) pyrophosphoryl-undecaprenol N-acetylglucosamine transferase (360 aa).

Serine 198 and glutamine 289 together coordinate UDP-N-acetyl-alpha-D-glucosamine.

It belongs to the glycosyltransferase 28 family. MurG subfamily.

Its subcellular location is the cell membrane. The enzyme catalyses Mur2Ac(oyl-L-Ala-gamma-D-Glu-L-Lys-D-Ala-D-Ala)-di-trans,octa-cis-undecaprenyl diphosphate + UDP-N-acetyl-alpha-D-glucosamine = beta-D-GlcNAc-(1-&gt;4)-Mur2Ac(oyl-L-Ala-gamma-D-Glu-L-Lys-D-Ala-D-Ala)-di-trans,octa-cis-undecaprenyl diphosphate + UDP + H(+). It functions in the pathway cell wall biogenesis; peptidoglycan biosynthesis. Cell wall formation. Catalyzes the transfer of a GlcNAc subunit on undecaprenyl-pyrophosphoryl-MurNAc-pentapeptide (lipid intermediate I) to form undecaprenyl-pyrophosphoryl-MurNAc-(pentapeptide)GlcNAc (lipid intermediate II). The protein is UDP-N-acetylglucosamine--N-acetylmuramyl-(pentapeptide) pyrophosphoryl-undecaprenol N-acetylglucosamine transferase of Streptococcus pyogenes serotype M12 (strain MGAS2096).